A 202-amino-acid polypeptide reads, in one-letter code: Securin (202 aa).

The interval 36-55 is disordered; that stretch reads DGRSQVSTPHVGKMFDAPPA. The D-box motif lies at 61-64; that stretch reads RKAL. 2 consecutive short sequence motifs (TEK-box) follow at residues 71-73 and 94-96; these read TEK. The SH3-binding motif lies at 163 to 173; that stretch reads PPSPLKMPPLL. Position 165 is a phosphoserine; by CDK1 (S165).

Belongs to the securin family. In terms of assembly, interacts with RPS10 and DNAJA1. Interacts with the caspase-like ESPL1, and prevents its protease activity probably by covering its active site. Interacts with TP53 and blocks its activity probably by blocking its binding to DNA. Interacts with the Ku 70 kDa subunit of ds-DNA kinase. Interacts with PTTG1IP. Post-translationally, phosphorylated at Ser-165 by CDK1 during mitosis. In terms of processing, phosphorylated in vitro by ds-DNA kinase. Ubiquitinated through 'Lys-11' linkage of ubiquitin moieties by the anaphase promoting complex (APC) at the onset of anaphase, conducting to its degradation. 'Lys-11'-linked ubiquitination is mediated by the E2 ligase UBE2C/UBCH10.

The protein localises to the cytoplasm. Its subcellular location is the nucleus. Regulatory protein, which plays a central role in chromosome stability, in the p53/TP53 pathway, and DNA repair. Probably acts by blocking the action of key proteins. During the mitosis, it blocks Separase/ESPL1 function, preventing the proteolysis of the cohesin complex and the subsequent segregation of the chromosomes. At the onset of anaphase, it is ubiquitinated, conducting to its destruction and to the liberation of ESPL1. Its function is however not limited to a blocking activity, since it is required to activate ESPL1. Negatively regulates the transcriptional activity and related apoptosis activity of TP53. The negative regulation of TP53 may explain the strong transforming capability of the protein when it is overexpressed. May also play a role in DNA repair via its interaction with Ku, possibly by connecting DNA damage-response pathways with sister chromatid separation. In Bos taurus (Bovine), this protein is Securin (PTTG1).